The following is a 342-amino-acid chain: Ribosomal RNA small subunit methyltransferase C (342 aa).

It belongs to the methyltransferase superfamily. RsmC family. Monomer.

The protein localises to the cytoplasm. The enzyme catalyses guanosine(1207) in 16S rRNA + S-adenosyl-L-methionine = N(2)-methylguanosine(1207) in 16S rRNA + S-adenosyl-L-homocysteine + H(+). Functionally, specifically methylates the guanine in position 1207 of 16S rRNA in the 30S particle. This chain is Ribosomal RNA small subunit methyltransferase C, found in Cronobacter sakazakii (strain ATCC BAA-894) (Enterobacter sakazakii).